The following is a 121-amino-acid chain: Ribonuclease P protein component (121 aa).

This sequence belongs to the RnpA family. In terms of assembly, consists of a catalytic RNA component (M1 or rnpB) and a protein subunit.

It carries out the reaction Endonucleolytic cleavage of RNA, removing 5'-extranucleotides from tRNA precursor.. RNaseP catalyzes the removal of the 5'-leader sequence from pre-tRNA to produce the mature 5'-terminus. It can also cleave other RNA substrates such as 4.5S RNA. The protein component plays an auxiliary but essential role in vivo by binding to the 5'-leader sequence and broadening the substrate specificity of the ribozyme. In Rickettsia prowazekii (strain Madrid E), this protein is Ribonuclease P protein component.